The chain runs to 397 residues: MSKTIAINAGSSSLKWQLYEMPEEKVVAKGIIERIGLKDSISTVKFDDKKDEQILDIVDHTQAVKILLEDLTKHGIIKDFNEITGVGHRVVAGGEYFKESALVDDKVVEQVEELSALAPLHNPAAAAGIRAFREILPDITSVCVFDTAFHTTMQPHTYLYPIPQKYYTDYKVRKYGAHGTSHQYVAQEAAKQLGRPLEELKLITAHVGNGVSITANYHGQSIDTSMGFTPLAGPMMGTRSGDIDPAIIPYLVANDPELEDAAAVVNMLNKQSGLLGVSGTSSDMRDIEAGLQSKDPNAVLAYNVFIDRIKKFIGQYLAVLNGADAIIFTAGMGENAPLMRQDVIAGLSWFGIELDPEKNVFGYFGDITKPDSKVKVLVIPTDEELMIARDVERLKAK.

Asn8 provides a ligand contact to Mg(2+). Residue Lys15 coordinates ATP. Residue Arg89 participates in substrate binding. Asp146 acts as the Proton donor/acceptor in catalysis. Residues His206–Gly210, Asp283–Arg285, and Gly331–Asn335 contribute to the ATP site. Mg(2+) is bound at residue Glu383.

The protein belongs to the acetokinase family. As to quaternary structure, homodimer. Mg(2+) serves as cofactor. The cofactor is Mn(2+).

Its subcellular location is the cytoplasm. It catalyses the reaction acetate + ATP = acetyl phosphate + ADP. The protein operates within metabolic intermediate biosynthesis; acetyl-CoA biosynthesis; acetyl-CoA from acetate: step 1/2. Functionally, catalyzes the formation of acetyl phosphate from acetate and ATP. Can also catalyze the reverse reaction. The protein is Acetate kinase of Streptococcus agalactiae serotype Ia (strain ATCC 27591 / A909 / CDC SS700).